Consider the following 588-residue polypeptide: Glutathione/L-cysteine transport system ATP-binding/permease protein CydD (588 aa).

The Cytoplasmic portion of the chain corresponds to 1–15; that stretch reads MNKSRQKELTRWLKQ. 2 helical membrane passes run 16–36 and 37–57; these read QSVISQRWLNISRLLGFVSGI and LIIAQAWFMARILQHMIMENI. One can recognise an ABC transmembrane type-1 domain in the interval 20-306; it reads SQRWLNISRL…APEFFQPLRD (287 aa). Residues 58–136 lie on the Cytoplasmic side of the membrane; sequence PREALLLPFT…LEQIDDMHDY (79 aa). Residues 137–157 form a helical membrane-spanning segment; sequence YARYLPQMALAVSVPLLIVVA. Residues 158–161 are Periplasmic-facing; the sequence is IFPS. A helical membrane pass occupies residues 162–182; it reads NWAAALILLGTAPLIPLFMAL. Over 183–249 the chain is Cytoplasmic; the sequence is VGMGAADANR…MEVLRLAFLS (67 aa). The chain crosses the membrane as a helical span at residues 250–270; that stretch reads SGILEFFTSLSIALVAVYFGF. At 271–276 the chain is on the periplasmic side; the sequence is SYLGEL. Residues 277 to 297 traverse the membrane as a helical segment; it reads DFGHYDTGVTLAAGFLALILA. Residues 298–573 are Cytoplasmic-facing; the sequence is PEFFQPLRDL…QGRYAELSVA (276 aa). The region spanning 339 to 572 is the ABC transporter domain; that stretch reads EAELASTDPV…EQGRYAELSV (234 aa). 373–380 serves as a coordination point for ATP; it reads LPAGQRAV.

The protein belongs to the ABC transporter superfamily. Cysteine exporter (TC 3.A.1.129.1) family. In terms of assembly, forms a heterodimer with CydC.

It is found in the cell inner membrane. The enzyme catalyses L-cysteine(in) + ATP + H2O = L-cysteine(out) + ADP + phosphate + H(+). It carries out the reaction glutathione(in) + ATP + H2O = glutathione(out) + ADP + phosphate + H(+). With respect to regulation, ATPase activity is stimulated by various thiol compounds. The presence of heme leads to a further enhancement of thiol-stimulated ATPase activity, although a large excess of heme inhibits activity. Glutathione transport is inhibited by sodium orthovanadate, an inhibitor of ABC-type transport systems, but not by the proton ionophore carbonyl cyanide m-chlorophenylhydrazone (CCCP). Functionally, part of the ABC transporter complex CydDC that exports the reduced low-molecular-weight thiols cysteine and glutathione to the periplasm. Export of these thiol-containing redox-active molecules may be crucial for redox homeostasis in the periplasm, permitting correct assembly of various respiratory complexes and formation of correct disulfide bonds in periplasmic and secreted proteins. CydD contains transmembrane domains (TMD), which form a pore in the inner membrane, and an ATP-binding domain (NBD), which is responsible for energy generation. Required for the assembly of functional cytochrome bd-type quinol oxidases and periplasmic c-type cytochromes. Overexpression of CydDC under anaerobic conditions also results in the formation of a heme biosynthesis-derived pigment, P-574. CydDC binds heme b, but heme is probably not transported by the complex and instead has a role in regulating ATPase activity. Conversely, a more recent study suggests an alternative function of CydDC: authors suggest that CydDC does not mediate the export of L-cysteine but rather reduces cytoplasmic L-cystine to L-cysteine. The principle function of CydDC would be to maintain the reduced state of cytoplasmic L-cysteine, thereby providing an important connection between sulfur metabolism, oxidative stress and resistance to antibiotics. The polypeptide is Glutathione/L-cysteine transport system ATP-binding/permease protein CydD (Escherichia coli (strain K12)).